Consider the following 342-residue polypeptide: Methionyl-tRNA formyltransferase (342 aa).

110–113 (SLLP) is a (6S)-5,6,7,8-tetrahydrofolate binding site.

Belongs to the Fmt family.

The catalysed reaction is L-methionyl-tRNA(fMet) + (6R)-10-formyltetrahydrofolate = N-formyl-L-methionyl-tRNA(fMet) + (6S)-5,6,7,8-tetrahydrofolate + H(+). Its function is as follows. Attaches a formyl group to the free amino group of methionyl-tRNA(fMet). The formyl group appears to play a dual role in the initiator identity of N-formylmethionyl-tRNA by promoting its recognition by IF2 and preventing the misappropriation of this tRNA by the elongation apparatus. The sequence is that of Methionyl-tRNA formyltransferase from Synechococcus sp. (strain CC9311).